A 560-amino-acid chain; its full sequence is Nucleoprotein (560 aa).

The segment at 53–236 (MRKDKRTDTD…ITQEQSQINV (184 aa)) is binding site for the cap structure m7GTP. The tract at residues 333-353 (LTDTGSPNHPPVRNGGSPRLS) is disordered. Mn(2+)-binding residues include Asp379 and Glu381. Residues Glu389, Cys496, His499, and Cys520 each contribute to the Zn(2+) site. Position 524 (Asp524) interacts with Mn(2+).

Belongs to the arenaviridae nucleocapsid protein family. As to quaternary structure, homomultimerizes to form the nucleocapsid. Binds to viral genomic RNA. Interacts with glycoprotein G2. Interacts with protein Z; this interaction probably directs the encapsidated genome to budding sites. Interacts with protein L; this interaction does not interfere with Z-L interaction. Interacts with host IKBKE (via Protein kinase domain); the interaction inhibits IKBKE kinase activity.

It localises to the virion. Its subcellular location is the host cytoplasm. In terms of biological role, encapsidates the genome, protecting it from nucleases. The encapsidated genomic RNA is termed the nucleocapsid (NC). Serves as template for viral transcription and replication. The increased presence of protein N in host cell does not seem to trigger the switch from transcription to replication as observed in other negative strain RNA viruses. Through the interaction with host IKBKE, strongly inhibits the phosphorylation and nuclear translocation of host IRF3, a protein involved in interferon activation pathway, leading to the inhibition of interferon-beta and IRF3-dependent promoters activation. Also encodes a functional 3'-5' exoribonuclease that degrades preferentially dsRNA substrates and thereby participates in the suppression of interferon induction. This chain is Nucleoprotein, found in Pirital mammarenavirus (isolate Rat/Venezuela/VAV-488/1995) (PIRV).